The chain runs to 174 residues: RNA pyrophosphohydrolase (174 aa).

One can recognise a Nudix hydrolase domain in the interval 6–150 (GFRPNVGIVI…KREVYRRVMK (145 aa)). Residues 38–59 (GGVDDGETPEQAMFRELYEEIG) carry the Nudix box motif.

This sequence belongs to the Nudix hydrolase family. RppH subfamily. It depends on a divalent metal cation as a cofactor.

Accelerates the degradation of transcripts by removing pyrophosphate from the 5'-end of triphosphorylated RNA, leading to a more labile monophosphorylated state that can stimulate subsequent ribonuclease cleavage. The protein is RNA pyrophosphohydrolase of Tolumonas auensis (strain DSM 9187 / NBRC 110442 / TA 4).